The sequence spans 122 residues: Large ribosomal subunit protein uL14c (122 aa).

This sequence belongs to the universal ribosomal protein uL14 family. In terms of assembly, part of the 50S ribosomal subunit.

Its subcellular location is the plastid. The protein resides in the chloroplast. Functionally, binds to 23S rRNA. The chain is Large ribosomal subunit protein uL14c from Capsella bursa-pastoris (Shepherd's purse).